The sequence spans 880 residues: Alanine--tRNA ligase (880 aa).

Residues H567, H571, C669, and H673 each contribute to the Zn(2+) site.

This sequence belongs to the class-II aminoacyl-tRNA synthetase family. The cofactor is Zn(2+).

Its subcellular location is the cytoplasm. It catalyses the reaction tRNA(Ala) + L-alanine + ATP = L-alanyl-tRNA(Ala) + AMP + diphosphate. Its function is as follows. Catalyzes the attachment of alanine to tRNA(Ala) in a two-step reaction: alanine is first activated by ATP to form Ala-AMP and then transferred to the acceptor end of tRNA(Ala). Also edits incorrectly charged Ser-tRNA(Ala) and Gly-tRNA(Ala) via its editing domain. The chain is Alanine--tRNA ligase from Bacillus anthracis.